Reading from the N-terminus, the 159-residue chain is ATP-dependent Clp protease adapter protein CLPS1, chloroplastic (159 aa).

Residues 1-44 (METAICGRLALAPSSLFNSKSGDKHLVSKGPCVNRSILMTLSTS) constitute a chloroplast transit peptide.

It belongs to the ClpS family. In terms of assembly, interacts with CLPC1 (via N-terminus) and CLPC2, but not with CLPt1 or CLPT2. Binds to ClpF; this interaction stimulates their association with ClpC. As to expression, expressed exclusively in photosynthetic green tissues with high levels in young, developing leaf tissues.

The protein resides in the plastid. The protein localises to the chloroplast stroma. In terms of biological role, small adapter protein that modulate the activity of CLPC. Involved in plastid biogenesis in particular when chloroplast protein synthesis capacity is a limiting factor. Probably involved in substrate selection for plastid Clp protease system. Recruitment to ClpC chaperones is facilitated by CLPF thus forming a binary adapter for selective substrate recognition and delivery to plastid Clp protease system (CLPC). The polypeptide is ATP-dependent Clp protease adapter protein CLPS1, chloroplastic (Arabidopsis thaliana (Mouse-ear cress)).